The chain runs to 578 residues: 2-succinyl-5-enolpyruvyl-6-hydroxy-3-cyclohexene-1-carboxylate synthase (578 aa).

It belongs to the TPP enzyme family. MenD subfamily. In terms of assembly, homodimer. Requires Mg(2+) as cofactor. Mn(2+) serves as cofactor. Thiamine diphosphate is required as a cofactor.

It catalyses the reaction isochorismate + 2-oxoglutarate + H(+) = 5-enolpyruvoyl-6-hydroxy-2-succinyl-cyclohex-3-ene-1-carboxylate + CO2. Its pathway is quinol/quinone metabolism; 1,4-dihydroxy-2-naphthoate biosynthesis; 1,4-dihydroxy-2-naphthoate from chorismate: step 2/7. The protein operates within quinol/quinone metabolism; menaquinone biosynthesis. Its function is as follows. Catalyzes the thiamine diphosphate-dependent decarboxylation of 2-oxoglutarate and the subsequent addition of the resulting succinic semialdehyde-thiamine pyrophosphate anion to isochorismate to yield 2-succinyl-5-enolpyruvyl-6-hydroxy-3-cyclohexene-1-carboxylate (SEPHCHC). This is 2-succinyl-5-enolpyruvyl-6-hydroxy-3-cyclohexene-1-carboxylate synthase from Prosthecochloris aestuarii (strain DSM 271 / SK 413).